Consider the following 148-residue polypeptide: Ribosomal RNA large subunit methyltransferase H (148 aa).

S-adenosyl-L-methionine-binding positions include L62, G94, and 113-118 (LSLLTL).

The protein belongs to the RNA methyltransferase RlmH family. As to quaternary structure, homodimer.

The protein resides in the cytoplasm. It carries out the reaction pseudouridine(1915) in 23S rRNA + S-adenosyl-L-methionine = N(3)-methylpseudouridine(1915) in 23S rRNA + S-adenosyl-L-homocysteine + H(+). Specifically methylates the pseudouridine at position 1915 (m3Psi1915) in 23S rRNA. The polypeptide is Ribosomal RNA large subunit methyltransferase H (Deinococcus geothermalis (strain DSM 11300 / CIP 105573 / AG-3a)).